Consider the following 174-residue polypeptide: Small ribosomal subunit protein uS5 (174 aa).

Residues 16–79 form the S5 DRBM domain; that stretch reads FSELIVSVRR…NAAKKNMIRV (64 aa).

Belongs to the universal ribosomal protein uS5 family. As to quaternary structure, part of the 30S ribosomal subunit. Contacts proteins S4 and S8.

Functionally, with S4 and S12 plays an important role in translational accuracy. Located at the back of the 30S subunit body where it stabilizes the conformation of the head with respect to the body. This is Small ribosomal subunit protein uS5 from Ehrlichia canis (strain Jake).